The following is a 433-amino-acid chain: Phosphoribosylamine--glycine ligase (433 aa).

The 207-residue stretch at 111–317 folds into the ATP-grasp domain; the sequence is EFMARNNIKG…FVDICEAIVD (207 aa). 138–194 lines the ATP pocket; it reads EDNPDVVVKPAGLTGGKGVKVMGEHMHTLEEAREYVKSVLEHDRVVIEERLKGEEVT. Mg(2+) contacts are provided by glutamine 275, glutamate 287, and asparagine 289. Positions 275, 287, and 289 each coordinate Mn(2+).

It belongs to the GARS family. Mg(2+) is required as a cofactor. Requires Mn(2+) as cofactor.

It carries out the reaction 5-phospho-beta-D-ribosylamine + glycine + ATP = N(1)-(5-phospho-beta-D-ribosyl)glycinamide + ADP + phosphate + H(+). The protein operates within purine metabolism; IMP biosynthesis via de novo pathway; N(1)-(5-phospho-D-ribosyl)glycinamide from 5-phospho-alpha-D-ribose 1-diphosphate: step 2/2. The sequence is that of Phosphoribosylamine--glycine ligase from Methanocella arvoryzae (strain DSM 22066 / NBRC 105507 / MRE50).